The chain runs to 292 residues: Geranyl diphosphate 2-C-methyltransferase (292 aa).

It belongs to the geranyl diphosphate 2-C-methyltransferase family. It depends on Mg(2+) as a cofactor.

It catalyses the reaction (2E)-geranyl diphosphate + S-adenosyl-L-methionine = (E)-2-methylgeranyl diphosphate + S-adenosyl-L-homocysteine + H(+). In terms of biological role, catalyzes the SAM-dependent methylation of geranyl diphosphate (GPP) to yield (E)-2-methylgeranyl diphosphate (2-MeGPP). This is Geranyl diphosphate 2-C-methyltransferase from Streptomyces coelicolor (strain ATCC BAA-471 / A3(2) / M145).